Here is a 337-residue protein sequence, read N- to C-terminus: Phosphate acyltransferase (337 aa).

It belongs to the PlsX family. In terms of assembly, homodimer. Probably interacts with PlsY.

The protein localises to the cytoplasm. The catalysed reaction is a fatty acyl-[ACP] + phosphate = an acyl phosphate + holo-[ACP]. It functions in the pathway lipid metabolism; phospholipid metabolism. In terms of biological role, catalyzes the reversible formation of acyl-phosphate (acyl-PO(4)) from acyl-[acyl-carrier-protein] (acyl-ACP). This enzyme utilizes acyl-ACP as fatty acyl donor, but not acyl-CoA. This is Phosphate acyltransferase from Moritella marina (Vibrio marinus).